Consider the following 263-residue polypeptide: 3'-5' ssDNA/RNA exonuclease TatD (263 aa).

A divalent metal cation is bound by residues Glu91, His127, and His152.

The protein belongs to the metallo-dependent hydrolases superfamily. TatD-type hydrolase family. TatD subfamily. Monomer. The cofactor is Mg(2+).

It localises to the cytoplasm. 3'-5' exonuclease that prefers single-stranded DNA and RNA. May play a role in the H(2)O(2)-induced DNA damage repair. The polypeptide is 3'-5' ssDNA/RNA exonuclease TatD (Klebsiella pneumoniae (strain 342)).